We begin with the raw amino-acid sequence, 85 residues long: Small ribosomal subunit protein bS20 (85 aa).

It belongs to the bacterial ribosomal protein bS20 family.

Functionally, binds directly to 16S ribosomal RNA. The sequence is that of Small ribosomal subunit protein bS20 from Borrelia turicatae (strain 91E135).